The sequence spans 390 residues: DNA primase small subunit PriS (390 aa).

Catalysis depends on residues Asp98, Asp100, and Asp296.

Belongs to the eukaryotic-type primase small subunit family. Heterodimer of a small subunit (PriS) and a large subunit (PriL). Mg(2+) serves as cofactor. Requires Mn(2+) as cofactor.

Functionally, catalytic subunit of DNA primase, an RNA polymerase that catalyzes the synthesis of short RNA molecules used as primers for DNA polymerase during DNA replication. The small subunit contains the primase catalytic core and has DNA synthesis activity on its own. Binding to the large subunit stabilizes and modulates the activity, increasing the rate of DNA synthesis while decreasing the length of the DNA fragments, and conferring RNA synthesis capability. The DNA polymerase activity may enable DNA primase to also catalyze primer extension after primer synthesis. May also play a role in DNA repair. This is DNA primase small subunit PriS from Methanococcoides burtonii (strain DSM 6242 / NBRC 107633 / OCM 468 / ACE-M).